Consider the following 157-residue polypeptide: Small ribosomal subunit protein uS7 (157 aa).

Belongs to the universal ribosomal protein uS7 family. In terms of assembly, part of the 30S ribosomal subunit. Contacts proteins S9 and S11.

Its function is as follows. One of the primary rRNA binding proteins, it binds directly to 16S rRNA where it nucleates assembly of the head domain of the 30S subunit. Is located at the subunit interface close to the decoding center, probably blocks exit of the E-site tRNA. The chain is Small ribosomal subunit protein uS7 from Roseiflexus castenholzii (strain DSM 13941 / HLO8).